The primary structure comprises 329 residues: Neuropeptides B/W receptor type 1 (329 aa).

Topologically, residues 1-43 are extracellular; that stretch reads MHNLTLFESGGDNVSCGGSSLGCPNGSSLAPLPLPQPLAVAVP. 3 N-linked (GlcNAc...) asparagine glycosylation sites follow: Asn-3, Asn-13, and Asn-25. The helical transmembrane segment at 44–64 threads the bilayer; sequence VVYGVICAVGLAGNSAVLYVL. The Cytoplasmic segment spans residues 65–75; the sequence is LRTPRMKTVTN. A helical membrane pass occupies residues 76-96; it reads VFILNLAIADELFTLVLPINI. Residues 97–112 are Extracellular-facing; it reads ADFLLRRWPFGEVMCK. The cysteines at positions 111 and 190 are disulfide-linked. A helical transmembrane segment spans residues 113 to 133; that stretch reads LIVAVDQYNTFSSLYFLAVMS. Topologically, residues 134–158 are cytoplasmic; it reads ADRYLVVLATAESRRVSGRTYGAAR. Residues 159 to 179 traverse the membrane as a helical segment; it reads AVSLAVWALVTLVVLPFAVFA. Over 180–209 the chain is Extracellular; that stretch reads RLDEEQGRRQCVLVFPQPEAFWWRASRLYT. Residues 210–230 form a helical membrane-spanning segment; that stretch reads LVLGFAIPVTTICALYTTLLC. At 231–250 the chain is on the cytoplasmic side; it reads RLRAIQLDSHAKALDRAKKR. Residues 251–271 form a helical membrane-spanning segment; sequence VTLLVAAILAVCLLCWTPYHL. The Extracellular segment spans residues 272–289; sequence STIVALTTDLPQTPLVIG. A helical membrane pass occupies residues 290 to 312; sequence ISYFITSLSYANSCLNPFLYAFL. The Cytoplasmic segment spans residues 313–329; that stretch reads DDSFRRSLRQLVSCRSA.

This sequence belongs to the G-protein coupled receptor 1 family.

It localises to the cell membrane. Interacts specifically with a number of opioid ligands. Receptor for neuropeptides B and W, which may be involved in neuroendocrine system regulation, food intake and the organization of other signals. The chain is Neuropeptides B/W receptor type 1 (Npbwr1) from Mus musculus (Mouse).